The following is a 399-amino-acid chain: Succinate--CoA ligase [ADP-forming] subunit beta (399 aa).

One can recognise an ATP-grasp domain in the interval 9–254; that stretch reads KELLAKYGVG…ETEEDPAEIE (246 aa). Residues K46, 53 to 55, V112, and E117 contribute to the ATP site; that span reads GRG. Positions 209 and 223 each coordinate Mg(2+). Substrate-binding positions include N274 and 331–333; that span reads GIM.

The protein belongs to the succinate/malate CoA ligase beta subunit family. In terms of assembly, heterotetramer of two alpha and two beta subunits. The cofactor is Mg(2+).

The enzyme catalyses succinate + ATP + CoA = succinyl-CoA + ADP + phosphate. It carries out the reaction GTP + succinate + CoA = succinyl-CoA + GDP + phosphate. It participates in carbohydrate metabolism; tricarboxylic acid cycle; succinate from succinyl-CoA (ligase route): step 1/1. Its function is as follows. Succinyl-CoA synthetase functions in the citric acid cycle (TCA), coupling the hydrolysis of succinyl-CoA to the synthesis of either ATP or GTP and thus represents the only step of substrate-level phosphorylation in the TCA. The beta subunit provides nucleotide specificity of the enzyme and binds the substrate succinate, while the binding sites for coenzyme A and phosphate are found in the alpha subunit. This is Succinate--CoA ligase [ADP-forming] subunit beta from Novosphingobium aromaticivorans (strain ATCC 700278 / DSM 12444 / CCUG 56034 / CIP 105152 / NBRC 16084 / F199).